Reading from the N-terminus, the 294-residue chain is Halotolerance protein HAL1 (294 aa).

The interval 115–153 is disordered; the sequence is LKRGTKEQEDINSSTSKKSAVINNFSGEKTPNPRPQSSN. Residues 125 to 153 show a composition bias toward polar residues; the sequence is INSSTSKKSAVINNFSGEKTPNPRPQSSN. At Ser-266 the chain carries Phosphoserine.

Its subcellular location is the cytoplasm. Its function is as follows. Involved in salt tolerance. This is Halotolerance protein HAL1 (HAL1) from Saccharomyces cerevisiae (strain ATCC 204508 / S288c) (Baker's yeast).